A 315-amino-acid chain; its full sequence is Deoxyhypusine hydroxylase (315 aa).

HEAT-like PBS-type repeat units lie at residues 23–52 (IAKR…LNDK), 56–82 (LRHE…LVKN), 89–115 (VRHE…YSND), 179–205 (NRYR…GLKD), 211–237 (LRHE…CVLD), and 244–270 (VRHE…LLQD). His58, His91, and Glu92 together coordinate Fe cation. Fe cation contacts are provided by His213, His246, and Glu247.

This sequence belongs to the deoxyhypusine hydroxylase family. Fe(2+) serves as cofactor.

The catalysed reaction is [eIF5A protein]-deoxyhypusine + AH2 + O2 = [eIF5A protein]-hypusine + A + H2O. It functions in the pathway protein modification; eIF5A hypusination. Catalyzes the hydroxylation of the N(6)-(4-aminobutyl)-L-lysine intermediate produced by deoxyhypusine synthase/DHPS on a critical lysine of the eukaryotic translation initiation factor 5A/eIF-5A. This is the second step of the post-translational modification of that lysine into an unusual amino acid residue named hypusine. Hypusination is unique to mature eIF-5A factor and is essential for its function. The chain is Deoxyhypusine hydroxylase (dohh-1) from Dictyostelium discoideum (Social amoeba).